A 572-amino-acid polypeptide reads, in one-letter code: Dihydroxy-acid dehydratase (572 aa).

C57 is a [2Fe-2S] cluster binding site. D89 provides a ligand contact to Mg(2+). Residue C130 coordinates [2Fe-2S] cluster. 2 residues coordinate Mg(2+): D131 and K132. Position 132 is an N6-carboxylysine (K132). C202 lines the [2Fe-2S] cluster pocket. E453 provides a ligand contact to Mg(2+). S479 (proton acceptor) is an active-site residue.

The protein belongs to the IlvD/Edd family. Homodimer. Requires [2Fe-2S] cluster as cofactor. Mg(2+) serves as cofactor.

The enzyme catalyses (2R)-2,3-dihydroxy-3-methylbutanoate = 3-methyl-2-oxobutanoate + H2O. It carries out the reaction (2R,3R)-2,3-dihydroxy-3-methylpentanoate = (S)-3-methyl-2-oxopentanoate + H2O. It functions in the pathway amino-acid biosynthesis; L-isoleucine biosynthesis; L-isoleucine from 2-oxobutanoate: step 3/4. It participates in amino-acid biosynthesis; L-valine biosynthesis; L-valine from pyruvate: step 3/4. Its function is as follows. Functions in the biosynthesis of branched-chain amino acids. Catalyzes the dehydration of (2R,3R)-2,3-dihydroxy-3-methylpentanoate (2,3-dihydroxy-3-methylvalerate) into 2-oxo-3-methylpentanoate (2-oxo-3-methylvalerate) and of (2R)-2,3-dihydroxy-3-methylbutanoate (2,3-dihydroxyisovalerate) into 2-oxo-3-methylbutanoate (2-oxoisovalerate), the penultimate precursor to L-isoleucine and L-valine, respectively. This chain is Dihydroxy-acid dehydratase, found in Streptococcus sanguinis (strain SK36).